We begin with the raw amino-acid sequence, 218 residues long: Imidazole glycerol phosphate synthase subunit HisH (218 aa).

Residues 1-213 (MTTIIDYGIG…AALPTTEEAG (213 aa)) form the Glutamine amidotransferase type-1 domain. Cysteine 79 serves as the catalytic Nucleophile. Residues histidine 188 and glutamate 190 contribute to the active site.

As to quaternary structure, heterodimer of HisH and HisF.

The protein localises to the cytoplasm. The catalysed reaction is 5-[(5-phospho-1-deoxy-D-ribulos-1-ylimino)methylamino]-1-(5-phospho-beta-D-ribosyl)imidazole-4-carboxamide + L-glutamine = D-erythro-1-(imidazol-4-yl)glycerol 3-phosphate + 5-amino-1-(5-phospho-beta-D-ribosyl)imidazole-4-carboxamide + L-glutamate + H(+). It catalyses the reaction L-glutamine + H2O = L-glutamate + NH4(+). Its pathway is amino-acid biosynthesis; L-histidine biosynthesis; L-histidine from 5-phospho-alpha-D-ribose 1-diphosphate: step 5/9. Functionally, IGPS catalyzes the conversion of PRFAR and glutamine to IGP, AICAR and glutamate. The HisH subunit catalyzes the hydrolysis of glutamine to glutamate and ammonia as part of the synthesis of IGP and AICAR. The resulting ammonia molecule is channeled to the active site of HisF. The polypeptide is Imidazole glycerol phosphate synthase subunit HisH (Salinibacter ruber (strain DSM 13855 / M31)).